Here is a 55-residue protein sequence, read N- to C-terminus: Large ribosomal subunit protein bL33 (55 aa).

It belongs to the bacterial ribosomal protein bL33 family.

The polypeptide is Large ribosomal subunit protein bL33 (Parvibaculum lavamentivorans (strain DS-1 / DSM 13023 / NCIMB 13966)).